We begin with the raw amino-acid sequence, 207 residues long: Protein MK0488 (207 aa).

Positions 8–200 constitute an AMMECR1 domain; that stretch reads EEGEFLVRLA…EEEPEGPVRE (193 aa).

The protein is Protein MK0488 of Methanopyrus kandleri (strain AV19 / DSM 6324 / JCM 9639 / NBRC 100938).